Reading from the N-terminus, the 1248-residue chain is von Willebrand factor A domain-containing protein 5B2 (1248 aa).

Positions 1–138 (MPGLYCPTSW…TMTVTLCSSR (138 aa)) constitute a VIT domain. Residues 184–204 (VGSPEEERPTWEQPTATPDVF) are disordered. The 174-residue stretch at 354-527 (ELLFLLDGSG…KALEPALSDI (174 aa)) folds into the VWFA domain. Disordered regions lie at residues 590–650 (PEEV…SSDT), 672–710 (SASP…QQGC), 751–789 (ALAG…EPGQ), 1008–1037 (SKSA…RLSL), and 1126–1168 (DSAT…SSDL). The span at 595-619 (SATSPGTEPTHTTEPLGTGTVSAEL) shows a compositional bias: polar residues. 3 stretches are compositionally biased toward low complexity: residues 684-701 (SSES…GSRP), 751-764 (ALAG…SGRA), and 780-789 (PDGLGPEPGQ). Residues 1127–1145 (SATASCSQSPSSGSEGPGQ) are compositionally biased toward low complexity. Over residues 1159–1168 (GMERQDSSDL) the composition is skewed to basic and acidic residues.

This Mus musculus (Mouse) protein is von Willebrand factor A domain-containing protein 5B2 (Vwa5b2).